Consider the following 227-residue polypeptide: Cytidylate kinase (227 aa).

12–20 (GPSGAGKGT) contacts ATP.

Belongs to the cytidylate kinase family. Type 1 subfamily.

The protein resides in the cytoplasm. The catalysed reaction is CMP + ATP = CDP + ADP. It carries out the reaction dCMP + ATP = dCDP + ADP. The sequence is that of Cytidylate kinase from Photorhabdus laumondii subsp. laumondii (strain DSM 15139 / CIP 105565 / TT01) (Photorhabdus luminescens subsp. laumondii).